Consider the following 125-residue polypeptide: Inner membrane protein YbjM (125 aa).

Residues 1-6 (MKHKQR) lie on the Cytoplasmic side of the membrane. The helical transmembrane segment at 7–27 (WAGAICCFVLFIVVCLFLATH) threads the bilayer. Residues 28-34 (MKGAFRA) are Periplasmic-facing. The chain crosses the membrane as a helical span at residues 35–55 (AGHPEIGLLFFILPGAVASFF). At 56–64 (SQRREVLKP) the chain is on the cytoplasmic side. Residues 65–85 (LFGAMLAAPCSMLIMRLFFSP) form a helical membrane-spanning segment. The Periplasmic segment spans residues 86–92 (TRSFWQE). The helical transmembrane segment at 93–113 (LAWLLSAVFWCALGALCFLFI) threads the bilayer. Over 114–125 (SSLFKPQHRKNQ) the chain is Cytoplasmic.

The protein resides in the cell inner membrane. The chain is Inner membrane protein YbjM (ybjM) from Escherichia coli O157:H7.